The sequence spans 123 residues: Small ribosomal subunit protein uS12 (123 aa).

D89 bears the 3-methylthioaspartic acid mark.

Belongs to the universal ribosomal protein uS12 family. As to quaternary structure, part of the 30S ribosomal subunit. Contacts proteins S8 and S17. May interact with IF1 in the 30S initiation complex.

Functionally, with S4 and S5 plays an important role in translational accuracy. Interacts with and stabilizes bases of the 16S rRNA that are involved in tRNA selection in the A site and with the mRNA backbone. Located at the interface of the 30S and 50S subunits, it traverses the body of the 30S subunit contacting proteins on the other side and probably holding the rRNA structure together. The combined cluster of proteins S8, S12 and S17 appears to hold together the shoulder and platform of the 30S subunit. The chain is Small ribosomal subunit protein uS12 from Prochlorococcus marinus (strain MIT 9211).